A 56-amino-acid polypeptide reads, in one-letter code: Large ribosomal subunit protein bL32 (56 aa).

Positions 1–20 (MAVPKKKKSKSKRNHRHAVW) are enriched in basic residues. Positions 1–21 (MAVPKKKKSKSKRNHRHAVWK) are disordered.

This sequence belongs to the bacterial ribosomal protein bL32 family.

This chain is Large ribosomal subunit protein bL32, found in Prochlorococcus marinus (strain MIT 9312).